Here is a 170-residue protein sequence, read N- to C-terminus: Translationally-controlled tumor protein homolog (170 aa).

The region spanning 1–170 (MIIYKDLLSG…FKDGLEIEKC (170 aa)) is the TCTP domain.

Belongs to the TCTP family.

The protein resides in the cytoplasm. Functionally, involved in calcium binding and microtubule stabilization. This is Translationally-controlled tumor protein homolog (tpt1) from Scophthalmus maximus (Turbot).